We begin with the raw amino-acid sequence, 209 residues long: Thiamine-phosphate synthase (209 aa).

Residues 38 to 42 (QLREK) and asparagine 70 contribute to the 4-amino-2-methyl-5-(diphosphooxymethyl)pyrimidine site. Mg(2+)-binding residues include aspartate 71 and aspartate 90. A 4-amino-2-methyl-5-(diphosphooxymethyl)pyrimidine-binding site is contributed by serine 109. Residue 135 to 137 (TPT) coordinates 2-[(2R,5Z)-2-carboxy-4-methylthiazol-5(2H)-ylidene]ethyl phosphate. Lysine 138 is a 4-amino-2-methyl-5-(diphosphooxymethyl)pyrimidine binding site. 2-[(2R,5Z)-2-carboxy-4-methylthiazol-5(2H)-ylidene]ethyl phosphate-binding positions include glycine 166 and 186–187 (IS).

This sequence belongs to the thiamine-phosphate synthase family. Requires Mg(2+) as cofactor.

The enzyme catalyses 2-[(2R,5Z)-2-carboxy-4-methylthiazol-5(2H)-ylidene]ethyl phosphate + 4-amino-2-methyl-5-(diphosphooxymethyl)pyrimidine + 2 H(+) = thiamine phosphate + CO2 + diphosphate. The catalysed reaction is 2-(2-carboxy-4-methylthiazol-5-yl)ethyl phosphate + 4-amino-2-methyl-5-(diphosphooxymethyl)pyrimidine + 2 H(+) = thiamine phosphate + CO2 + diphosphate. It catalyses the reaction 4-methyl-5-(2-phosphooxyethyl)-thiazole + 4-amino-2-methyl-5-(diphosphooxymethyl)pyrimidine + H(+) = thiamine phosphate + diphosphate. The protein operates within cofactor biosynthesis; thiamine diphosphate biosynthesis; thiamine phosphate from 4-amino-2-methyl-5-diphosphomethylpyrimidine and 4-methyl-5-(2-phosphoethyl)-thiazole: step 1/1. Condenses 4-methyl-5-(beta-hydroxyethyl)thiazole monophosphate (THZ-P) and 2-methyl-4-amino-5-hydroxymethyl pyrimidine pyrophosphate (HMP-PP) to form thiamine monophosphate (TMP). The protein is Thiamine-phosphate synthase of Syntrophomonas wolfei subsp. wolfei (strain DSM 2245B / Goettingen).